A 182-amino-acid chain; its full sequence is Adenine phosphoribosyltransferase (182 aa).

Belongs to the purine/pyrimidine phosphoribosyltransferase family. As to quaternary structure, homodimer.

It is found in the cytoplasm. The enzyme catalyses AMP + diphosphate = 5-phospho-alpha-D-ribose 1-diphosphate + adenine. It participates in purine metabolism; AMP biosynthesis via salvage pathway; AMP from adenine: step 1/1. Functionally, catalyzes a salvage reaction resulting in the formation of AMP, that is energically less costly than de novo synthesis. This is Adenine phosphoribosyltransferase from Pseudomonas syringae pv. syringae (strain B728a).